We begin with the raw amino-acid sequence, 706 residues long: Sodium- and chloride-dependent glycine transporter 1 (706 aa).

A disordered region spans residues 1–26; that stretch reads MSGGDTRAAIARPRMAAAHGPVAPSS. The Cytoplasmic portion of the chain corresponds to 1 to 108; it reads MSGGDTRAAI…KRGNWGNQIE (108 aa). Over residues 7 to 18 the composition is skewed to low complexity; the sequence is RAAIARPRMAAA. The next 3 membrane-spanning stretches (helical) occupy residues 109–129, 136–156, and 188–208; these read FVLTSVGYAVGLGNVWRFPYL, GAFMFPYFIMLIFCGIPLFFM, and VSTYIGIYYNVVICIAFYYFF. Residues 209 to 285 are Extracellular-facing; it reads SSMTHVLPWA…LSDDIGNFGE (77 aa). A run of 9 helical transmembrane segments spans residues 286–306, 315–335, 360–380, 407–427, 450–470, 506–526, 530–550, 570–590, and 610–630; these read VRLPLLGCLGVSWLVVFLCLI, VVYFTATFPYVVLTILFVRGV, VWGDAASQIFYSLGCAWGGLI, SVYAGFVIFSILGFMANHLGV, LLPISPLWSLLFFFMLILLGL, VAGFLLGIPLTSQAGIYWLLL, YAASFSLVVISCIMCVAIMYI, LFFQICWRFVSPAIIFFILVF, and VAIGFLMALSSVLCIPLYAMF. The Cytoplasmic segment spans residues 631-706; the sequence is RLCRTDGDTL…GSSRLQDSRI (76 aa). Ser-673 and Ser-698 each carry phosphoserine. The segment at 695 to 706 is essential for interaction with EXOC1; the sequence is SNGSSRLQDSRI.

It belongs to the sodium:neurotransmitter symporter (SNF) (TC 2.A.22) family. SLC6A9 subfamily. In terms of assembly, interacts with EXOC1; interaction increases the transporter capacity of SLC6A9 probably by promoting its insertion into the cell membrane. Interacts with EXOC3 and EXOC4. In terms of tissue distribution, expressed in the brain, kidney, pancreas, lung, placenta and liver. As to expression, expressed only in the brain.

Its subcellular location is the cell membrane. It carries out the reaction glycine(out) + chloride(out) + 2 Na(+)(out) = glycine(in) + chloride(in) + 2 Na(+)(in). Inhibited by sarcosine. Sodium- and chloride-dependent glycine transporter. Essential for regulating glycine concentrations at inhibitory glycinergic synapses. In terms of biological role, sodium- and chloride-dependent glycine transporter. This Homo sapiens (Human) protein is Sodium- and chloride-dependent glycine transporter 1 (SLC6A9).